Reading from the N-terminus, the 440-residue chain is 3-phosphoshikimate 1-carboxyvinyltransferase (440 aa).

Residues K19, S20, and R24 each contribute to the 3-phosphoshikimate site. K19 serves as a coordination point for phosphoenolpyruvate. Residues G92 and R121 each coordinate phosphoenolpyruvate. 3-phosphoshikimate-binding residues include S166, Q168, D315, and K342. Q168 lines the phosphoenolpyruvate pocket. Residue D315 is the Proton acceptor of the active site. Positions 346 and 399 each coordinate phosphoenolpyruvate.

It belongs to the EPSP synthase family. As to quaternary structure, monomer.

The protein localises to the cytoplasm. The enzyme catalyses 3-phosphoshikimate + phosphoenolpyruvate = 5-O-(1-carboxyvinyl)-3-phosphoshikimate + phosphate. It functions in the pathway metabolic intermediate biosynthesis; chorismate biosynthesis; chorismate from D-erythrose 4-phosphate and phosphoenolpyruvate: step 6/7. Functionally, catalyzes the transfer of the enolpyruvyl moiety of phosphoenolpyruvate (PEP) to the 5-hydroxyl of shikimate-3-phosphate (S3P) to produce enolpyruvyl shikimate-3-phosphate and inorganic phosphate. The chain is 3-phosphoshikimate 1-carboxyvinyltransferase from Leptospira interrogans serogroup Icterohaemorrhagiae serovar copenhageni (strain Fiocruz L1-130).